The following is a 498-amino-acid chain: Neuronal acetylcholine receptor subunit beta-4 (498 aa).

The first 21 residues, 1 to 21 (MRRAPSLVLFFLVALCGRGNC), serve as a signal peptide directing secretion. Residues 22-239 (RVANAEEKLM…RKPLFYTINL (218 aa)) lie on the Extracellular side of the membrane. Asn-36, Asn-93, Asn-138, and Asn-166 each carry an N-linked (GlcNAc...) asparagine glycan. A disulfide bridge links Cys-153 with Cys-167. A helical membrane pass occupies residues 240-255 (IIPCVLTTLLAILVFY). The Cytoplasmic segment spans residues 256 to 261 (LPSDCG). Residue Glu-262 coordinates Na(+). A helical membrane pass occupies residues 262–277 (EKMTLCISVLLALTFF). Residues 278-296 (LLLISKIVPPTSLDVPLIG) lie on the Extracellular side of the membrane. The helical transmembrane segment at 297–321 (KYLMFTMVLVTFSIVTSVCVLNVHH) threads the bilayer. Residues 322–454 (RSPSTHTMAP…QSVVEDWKYV (133 aa)) are Cytoplasmic-facing. The tract at residues 357–377 (ARAFPPSKSCVTKPEATATST) is disordered. Residues 455–478 (AMVVDRLFLWVFMFVCVLGTVGLF) traverse the membrane as a helical segment. The Extracellular segment spans residues 479-498 (LPPLFQTHAASEGPYAAQRD).

It belongs to the ligand-gated ion channel (TC 1.A.9) family. Acetylcholine receptor (TC 1.A.9.1) subfamily. Beta-4/CHRNB4 sub-subfamily. In terms of assembly, neuronal AChR is composed of two different types of subunits: alpha and beta. CHRNB4/Beta-4 subunit can be combined to CHRNA2/alpha-2, CHRNA3/alpha-3 or CHRNA4/alpha-4, CHRNA5/alpha-5 and CHRNB3/beta-3 to give rise to functional receptors. Forms stoichiometries such as (CHRNA3)2:(CHRNB4)3 or (CHRNA3:CHRNB4)2:CHRNB3. Interacts with RIC3; which is required for proper folding and assembly. Interacts with LYPD6.

Its subcellular location is the synaptic cell membrane. It is found in the cell membrane. It carries out the reaction Ca(2+)(in) = Ca(2+)(out). The catalysed reaction is K(+)(in) = K(+)(out). The enzyme catalyses Na(+)(in) = Na(+)(out). With respect to regulation, activated by a myriad of ligands such as acetylcholine, cytisine, nicotine, choline and epibatidine. The heteropentamer CHRNA3:CHRNB4 activity is blocked by the alpha-conotoxin ImI and AuIB. Component of neuronal acetylcholine receptors (nAChRs) that function as pentameric, ligand-gated cation channels with high calcium permeability among other activities. nAChRs are excitatory neurotrasnmitter receptors formed by a collection of nAChR subunits known to mediate synaptic transmission in the nervous system and the neuromuscular junction. Each nAchR subunit confers differential attributes to channel properties, including activation, deactivation and desensitization kinetics, pH sensitivity, cation permeability, and binding to allosteric modulators. CHRNB4 forms heteropentameric neuronal acetylcholine receptors with CHRNA2, CHRNA3 and CHRNA4, as well as CHRNA5 and CHRNB3 as accesory subunits. CHRNA3:CHRNB4 being predominant in neurons of the autonomic ganglia, it is known as ganglionic nicotinic receptor. CHRNA3:CHRNB4 or CHRNA3:CHRNA5:CHRNB4 play also an important role in the habenulo-interpeduncular tract, modulating the mesolimbic dopamine system and affecting reward circuits and addiction. Hypothalamic CHRNA3:CHRNB4 nAChR activation by nicotine leads to activation of POMC neurons and a decrease in food intake. This Homo sapiens (Human) protein is Neuronal acetylcholine receptor subunit beta-4.